Reading from the N-terminus, the 589-residue chain is Phenylalanine--tRNA ligase beta subunit (589 aa).

One can recognise a B5 domain in the interval 290 to 368 (LNPTCFKADI…IAYGYDNLKH (79 aa)). The Mg(2+) site is built by D346, D352, E355, and D356.

It belongs to the phenylalanyl-tRNA synthetase beta subunit family. Type 2 subfamily. In terms of assembly, tetramer of two alpha and two beta subunits. Mg(2+) is required as a cofactor.

The protein localises to the cytoplasm. The protein resides in the nucleus. It carries out the reaction tRNA(Phe) + L-phenylalanine + ATP = L-phenylalanyl-tRNA(Phe) + AMP + diphosphate + H(+). The sequence is that of Phenylalanine--tRNA ligase beta subunit (frs1) from Schizosaccharomyces pombe (strain 972 / ATCC 24843) (Fission yeast).